The sequence spans 246 residues: 14-3-3 protein eta (246 aa).

An N-acetylglycine modification is found at Gly2. 2 positions are modified to phosphoserine: Ser25 and Ser59.

The protein belongs to the 14-3-3 family. In terms of assembly, homodimer. Interacts with many nuclear hormone receptors and cofactors including AR, ESR1, ESR2, MC2R, NR3C1, NRIP1, PPARBP and THRA. Interacts with ABL1 (phosphorylated form); the interaction retains it in the cytoplasm. Interacts with ARHGEF28 and CDK16. Weakly interacts with CDKN1B. Interacts with GAB2. Interacts with KCNK18 in a phosphorylation-dependent manner. Interacts with SAMSN1. Interacts with the 'Ser-241' phosphorylated form of PDPK1. Interacts with the 'Thr-369' phosphorylated form of DAPK2. Interacts with PI4KB, TBC1D22A and TBC1D22B. Interacts with SLITRK1. Interacts with MEFV. In terms of processing, phosphorylated on Ser-59 by protein kinase C delta type catalytic subunit in a sphingosine-dependent fashion. Expressed mainly in the brain and present in other tissues albeit at lower levels.

Its function is as follows. Adapter protein implicated in the regulation of a large spectrum of both general and specialized signaling pathways. Binds to a large number of partners, usually by recognition of a phosphoserine or phosphothreonine motif. Binding generally results in the modulation of the activity of the binding partner. Negatively regulates the kinase activity of PDPK1. This chain is 14-3-3 protein eta (YWHAH), found in Homo sapiens (Human).